Reading from the N-terminus, the 561-residue chain is uncharacterized protein (561 aa).

6 consecutive transmembrane segments (helical) span residues 27 to 49, 54 to 71, 83 to 105, 115 to 137, 142 to 162, and 177 to 199; these read ILEF…GLLI, FFGI…ALAL, LVYQ…SEFF, LTLF…IKLF, IIGA…AAMV, and VVGY…AIGA. Residues 292-373 enclose the RCK C-terminal domain; sequence QQDVPIEDTD…MSEVRRFLGD (82 aa). Helical transmembrane passes span 383–405, 409–428, 441–463, and 478–500; these read LMPF…PLPG, LSLG…GALN, ASRT…SAGV, and IAGG…MPLF.

Belongs to the AAE transporter (TC 2.A.81) family.

It is found in the cell membrane. This is an uncharacterized protein from Corynebacterium diphtheriae (strain ATCC 700971 / NCTC 13129 / Biotype gravis).